Consider the following 1650-residue polypeptide: HEAT repeat-containing protein 1 homolog (1650 aa).

The disordered stretch occupies residues 1183–1210 (QYDSAASPGSSVAGGRGNRGHRIRQQSL). Residues 1609–1645 (LLPFLNELIEDENKQVEAQCQKVINSLQHKFGETFWS) form an HEAT repeat.

This sequence belongs to the HEATR1/UTP10 family.

It localises to the nucleus. The protein resides in the nucleolus. In terms of biological role, involved in nucleolar processing of pre-18S ribosomal RNA. Involved in ribosome biosynthesis. This Caenorhabditis elegans protein is HEAT repeat-containing protein 1 homolog (toe-1).